Consider the following 639-residue polypeptide: Wall-associated receptor kinase-like 15 (639 aa).

Residues 1–25 form the signal peptide; the sequence is MELPWLSLTTFTLSLLIYFSSTTQA. Topologically, residues 26–282 are extracellular; it reads FKRCPNCGST…KRKSCKRWSN (257 aa). N68, N115, N126, N141, and N241 each carry an N-linked (GlcNAc...) asparagine glycan. The chain crosses the membrane as a helical span at residues 283 to 303; it reads LPLLGGLAGGVGAILIAGFIT. At 304 to 639 the chain is on the cytoplasmic side; the sequence is KTIVSKQNRR…KEIENILHGI (336 aa). The Protein kinase domain maps to 354–639; the sequence is FAKSNLLGFG…KEIENILHGI (286 aa). ATP is bound by residues 360–368 and K382; that span reads LGFGGFGEV. Catalysis depends on D484, which acts as the Proton acceptor.

The protein belongs to the protein kinase superfamily. Ser/Thr protein kinase family.

The protein resides in the membrane. The catalysed reaction is L-seryl-[protein] + ATP = O-phospho-L-seryl-[protein] + ADP + H(+). The enzyme catalyses L-threonyl-[protein] + ATP = O-phospho-L-threonyl-[protein] + ADP + H(+). Functionally, putative serine/threonine-protein kinase that may function as a signaling receptor of extracellular matrix component. In Arabidopsis thaliana (Mouse-ear cress), this protein is Wall-associated receptor kinase-like 15 (WAKL15).